We begin with the raw amino-acid sequence, 388 residues long: Probable peptidoglycan glycosyltransferase FtsW (388 aa).

The Cytoplasmic segment spans residues 1 to 19 (MMSPSTSAPHNQPIQPELD). A helical membrane pass occupies residues 20–40 (VLLVSTVLLLLGLGLVMVYSA). The Periplasmic portion of the chain corresponds to 41-55 (SIAIAEAKFGEGSSY). Residues 56 to 76 (YFLARQASYILAGIAVGIGCF) form a helical membrane-spanning segment. Over 77-89 (RIPLRWWQAYSHY) the chain is Cytoplasmic. Residues 90–110 (LLGLGILLLLVVLIPGISHEI) form a helical membrane-spanning segment. Residues 111-116 (NGSRRW) lie on the Periplasmic side of the membrane. Residues 117–137 (IPLGITSFQPSELMKLIILIF) traverse the membrane as a helical segment. The Cytoplasmic portion of the chain corresponds to 138 to 151 (TADYVVRKAAFKDH). A helical transmembrane segment spans residues 152–172 (FFKGFLPILALLTIVSLLLLM). Residues 173–175 (EPD) lie on the Periplasmic side of the membrane. The next 2 helical transmembrane spans lie at 176–196 (LGATVVIAAIVLSIMFMNGMS) and 197–217 (LKMFFGLICLVPVLLALLIII). Residues 218-284 (EPYRMDRINA…DFMFAVLAEE (67 aa)) lie on the Periplasmic side of the membrane. A helical membrane pass occupies residues 285–305 (LGFAGVVTVISLFFFLLVRIF). The Cytoplasmic portion of the chain corresponds to 306-324 (KVGRTAARLGDQFGSLVAQ). Residues 325 to 345 (GIGVWLGLQAFINMGVNMGLL) traverse the membrane as a helical segment. The Periplasmic segment spans residues 346-351 (PTKGLT). Residues 352–372 (LPFMSYGGSSIVINSIAIAIL) form a helical membrane-spanning segment. Residues 373-388 (LRIDWENRLKRRGLNA) lie on the Cytoplasmic side of the membrane.

The protein belongs to the SEDS family. FtsW subfamily.

The protein localises to the cell inner membrane. The catalysed reaction is [GlcNAc-(1-&gt;4)-Mur2Ac(oyl-L-Ala-gamma-D-Glu-L-Lys-D-Ala-D-Ala)](n)-di-trans,octa-cis-undecaprenyl diphosphate + beta-D-GlcNAc-(1-&gt;4)-Mur2Ac(oyl-L-Ala-gamma-D-Glu-L-Lys-D-Ala-D-Ala)-di-trans,octa-cis-undecaprenyl diphosphate = [GlcNAc-(1-&gt;4)-Mur2Ac(oyl-L-Ala-gamma-D-Glu-L-Lys-D-Ala-D-Ala)](n+1)-di-trans,octa-cis-undecaprenyl diphosphate + di-trans,octa-cis-undecaprenyl diphosphate + H(+). It participates in cell wall biogenesis; peptidoglycan biosynthesis. Functionally, peptidoglycan polymerase that is essential for cell division. The polypeptide is Probable peptidoglycan glycosyltransferase FtsW (Nitrosomonas europaea (strain ATCC 19718 / CIP 103999 / KCTC 2705 / NBRC 14298)).